The chain runs to 334 residues: Fructose-1,6-bisphosphatase class 1 (334 aa).

Glu-90, Asp-113, Leu-115, and Asp-116 together coordinate Mg(2+). Residues 116–119 (DGSS), Asn-209, Tyr-242, and Lys-272 each bind substrate. Residue Glu-278 coordinates Mg(2+).

It belongs to the FBPase class 1 family. As to quaternary structure, homotetramer. Requires Mg(2+) as cofactor.

Its subcellular location is the cytoplasm. The enzyme catalyses beta-D-fructose 1,6-bisphosphate + H2O = beta-D-fructose 6-phosphate + phosphate. Its pathway is carbohydrate biosynthesis; gluconeogenesis. The sequence is that of Fructose-1,6-bisphosphatase class 1 from Haemophilus ducreyi (strain 35000HP / ATCC 700724).